We begin with the raw amino-acid sequence, 457 residues long: Proton extrusion protein PxcA (457 aa).

The next 4 helical transmembrane spans lie at 239 to 259 (FILL…TFFL), 332 to 352 (INAI…GVVI), 368 to 390 (GILY…DMFV), and 417 to 437 (FNFL…KYWI).

It belongs to the CemA family.

Its subcellular location is the cell inner membrane. In terms of biological role, required for H(+) efflux immediately after light irradiation to form a rapid H(+) concentration gradient across the thylakoid membranes. Together with PxcL, contributes to transient H(+) uptake following dark to light transition. The chain is Proton extrusion protein PxcA from Gloeothece citriformis (strain PCC 7424) (Cyanothece sp. (strain PCC 7424)).